We begin with the raw amino-acid sequence, 339 residues long: AT-hook motif nuclear-localized protein 26 (339 aa).

Over residues 1 to 12 (MDPVQSHGSQSS) the composition is skewed to polar residues. 2 disordered regions span residues 1–132 (MDPV…NKPK) and 273–339 (MQTP…RPPY). The span at 24–45 (LHLQQQQQHQQQHQQQQQQQFF) shows a compositional bias: low complexity. Positions 82–93 (NMDNIANTNSGS) are enriched in polar residues. Gly residues predominate over residues 102-113 (GGEGGSGGGGSG). The segment at residues 118–130 (RRPRGRPAGSKNK) is a DNA-binding region (a.T hook). Residues 142-279 (ANALRTHVME…EDEMQTPVQG (138 aa)) form the PPC domain. Residues 278–291 (QGGGGGGGGGGGMG) show a composition bias toward gly residues. Low complexity predominate over residues 292–310 (SPPMMGQQQAMAAMAAAQG).

Its subcellular location is the nucleus. In terms of biological role, transcription factor that specifically binds AT-rich DNA sequences related to the nuclear matrix attachment regions (MARs). This Arabidopsis thaliana (Mouse-ear cress) protein is AT-hook motif nuclear-localized protein 26.